We begin with the raw amino-acid sequence, 106 residues long: uncharacterized protein (106 aa).

An N-terminal signal peptide occupies residues 1–31; the sequence is MNNERLMLKGIFLGAAAGAALSLLHKPTRQA. A coiled-coil region spans residues 57 to 89; that stretch reads VITKVDEAKKLARTLSKEVDFVNQQVKELKKTT.

This is an uncharacterized protein from Bacillus subtilis (strain 168).